Reading from the N-terminus, the 340-residue chain is MALSVYYDKDCNLDLIRSKKVAVVGFGSQGHAHAENLRDSGVEVVIGLHKGGSSWSKAEAKNFKVMEVAEASRYADVIMILIPDELQAEVFERDILPNLSEGKAIAFGHGFNVHFGQIKAPKGVDVIMIAPKAPGHTVRSEFVKGGGIPDLIAVEQNASGIAKEICLSYASAIGGGRTGIIETTFKDETETDLFGEQAVLCGGVTALVKAGFETLVEAGYPEEMAYFECLHELKLIVDLIFQGGLSDMRYSVSNTAEYGDMVSGPRVVNETSKAAMKEILKDIQEGRFAKDFILERKAGYARMNAERKNLAAHPIEQTGERLRAMMPWIGANKIIDKNRN.

The KARI N-terminal Rossmann domain maps to 3 to 183 (LSVYYDKDCN…GGGRTGIIET (181 aa)). Residues 26–29 (FGSQ), Ser54, and 84–87 (DELQ) contribute to the NADP(+) site. His109 is a catalytic residue. Gly135 lines the NADP(+) pocket. In terms of domain architecture, KARI C-terminal knotted spans 184–329 (TFKDETETDL…ERLRAMMPWI (146 aa)). Residues Asp192, Glu196, Glu228, and Glu232 each coordinate Mg(2+). Substrate is bound at residue Ser253.

Belongs to the ketol-acid reductoisomerase family. The cofactor is Mg(2+).

The enzyme catalyses (2R)-2,3-dihydroxy-3-methylbutanoate + NADP(+) = (2S)-2-acetolactate + NADPH + H(+). It carries out the reaction (2R,3R)-2,3-dihydroxy-3-methylpentanoate + NADP(+) = (S)-2-ethyl-2-hydroxy-3-oxobutanoate + NADPH + H(+). It functions in the pathway amino-acid biosynthesis; L-isoleucine biosynthesis; L-isoleucine from 2-oxobutanoate: step 2/4. The protein operates within amino-acid biosynthesis; L-valine biosynthesis; L-valine from pyruvate: step 2/4. In terms of biological role, involved in the biosynthesis of branched-chain amino acids (BCAA). Catalyzes an alkyl-migration followed by a ketol-acid reduction of (S)-2-acetolactate (S2AL) to yield (R)-2,3-dihydroxy-isovalerate. In the isomerase reaction, S2AL is rearranged via a Mg-dependent methyl migration to produce 3-hydroxy-3-methyl-2-ketobutyrate (HMKB). In the reductase reaction, this 2-ketoacid undergoes a metal-dependent reduction by NADPH to yield (R)-2,3-dihydroxy-isovalerate. The protein is Ketol-acid reductoisomerase (NADP(+)) of Wolinella succinogenes (strain ATCC 29543 / DSM 1740 / CCUG 13145 / JCM 31913 / LMG 7466 / NCTC 11488 / FDC 602W) (Vibrio succinogenes).